The chain runs to 595 residues: NADH-quinone oxidoreductase subunit C/D (595 aa).

The NADH dehydrogenase I subunit C stretch occupies residues 1-185 (MNKNICLSAS…NPFVLTKEKE (185 aa)). An NADH dehydrogenase I subunit D region spans residues 209 to 595 (DFMFLNFGPN…IDFVMSDVDR (387 aa)).

The protein in the N-terminal section; belongs to the complex I 30 kDa subunit family. This sequence in the C-terminal section; belongs to the complex I 49 kDa subunit family. In terms of assembly, NDH-1 is composed of 13 different subunits. Subunits NuoB, CD, E, F, and G constitute the peripheral sector of the complex.

Its subcellular location is the cell inner membrane. It catalyses the reaction a quinone + NADH + 5 H(+)(in) = a quinol + NAD(+) + 4 H(+)(out). Functionally, NDH-1 shuttles electrons from NADH, via FMN and iron-sulfur (Fe-S) centers, to quinones in the respiratory chain. The immediate electron acceptor for the enzyme in this species is believed to be ubiquinone. Couples the redox reaction to proton translocation (for every two electrons transferred, four hydrogen ions are translocated across the cytoplasmic membrane), and thus conserves the redox energy in a proton gradient. In Baumannia cicadellinicola subsp. Homalodisca coagulata, this protein is NADH-quinone oxidoreductase subunit C/D.